The sequence spans 285 residues: MQLCGFNVGLDQRFFLIAGTCSIEGLEMSLDVAGQLKEACAPLGIPLIYKGSFDKANRSSGTSKRGVGLDAGLKILDEVRRQLQLPILTDVHDTSHVAEVASVVDVLQTPAFLCRQTDFIRAVAQSGKPVNIKKGQFLAPWDMKNVIDKARAAAREVGLSEDRFLACERGVSFGYNNLVADMTSLAEMRNSGAPVVFDVTHSVQKPGGLGAVSGGARDMVPVLARAGVAVGVAGLFMETHPKPAEAWSDGPNAVPLKHMRALLETLVALDDVTKKNGFLENNFGA.

It belongs to the KdsA family.

The protein localises to the cytoplasm. It carries out the reaction D-arabinose 5-phosphate + phosphoenolpyruvate + H2O = 3-deoxy-alpha-D-manno-2-octulosonate-8-phosphate + phosphate. It participates in carbohydrate biosynthesis; 3-deoxy-D-manno-octulosonate biosynthesis; 3-deoxy-D-manno-octulosonate from D-ribulose 5-phosphate: step 2/3. Its pathway is bacterial outer membrane biogenesis; lipopolysaccharide biosynthesis. This Acidovorax ebreus (strain TPSY) (Diaphorobacter sp. (strain TPSY)) protein is 2-dehydro-3-deoxyphosphooctonate aldolase.